A 478-amino-acid chain; its full sequence is FERM domain-containing protein B (478 aa).

Disordered stretches follow at residues 19–39 (ELIP…TITS), 129–196 (EENS…GFLT), and 202–221 (KAQS…TIAS). Low complexity-rich tracts occupy residues 22-39 (PTQS…TITS) and 129-164 (EENS…ANDG). In terms of domain architecture, FERM spans 48-468 (VLIRIYFIDD…DWSEEWESKE (421 aa)). Gly residues predominate over residues 165–179 (SGSGSGSGSGSGSGS). 2 stretches are compositionally biased toward low complexity: residues 180 to 189 (GTSTPNSPKG) and 204 to 216 (QSPQ…SSLS).

This Dictyostelium discoideum (Social amoeba) protein is FERM domain-containing protein B (frmB).